Consider the following 384-residue polypeptide: Actin-binding Rho-activating protein (384 aa).

The span at 1–11 (MARGEKGRGEG) shows a compositional bias: basic and acidic residues. 3 disordered regions span residues 1 to 20 (MARG…LRKV), 32 to 159 (GWQQ…SPTR), and 181 to 211 (EQEE…EQDG). Residues 35-47 (QWANENSTRQAQE) show a composition bias toward polar residues. The segment covering 134–145 (DGDEPEPEQPES) has biased composition (acidic residues). Phosphoserine is present on residues Ser-156 and Ser-191. 2 actin-binding regions span residues 202-302 (ETEE…AERA) and 303-384 (KRAE…TLLK). Interaction with actin regions lie at residues 243–288 (SQVG…GDEG) and 355–384 (MRAR…TLLK).

Binds F-actin and ABLIM1, ABLIM2 and ABLIM3. Interaction with ABLIM2 and ABLIM3 enhances activity. As to expression, specifically expressed in heart and skeletal muscles.

The protein resides in the cytoplasm. The protein localises to the myofibril. Its subcellular location is the sarcomere. It localises to the cytoskeleton. Acts as an activator of serum response factor (SRF)-dependent transcription possibly by inducing nuclear translocation of MKL1 or MKL2 and through a mechanism requiring Rho-actin signaling. This Sus scrofa (Pig) protein is Actin-binding Rho-activating protein (ABRA).